The primary structure comprises 555 residues: Urocanate hydratase (555 aa).

NAD(+) is bound by residues 52-53 (GG), Q130, 176-178 (GMG), E196, R201, 242-243 (NA), 263-267 (QTSAH), 273-274 (YL), and Y322. C410 is a catalytic residue. NAD(+) is bound at residue G492.

The protein belongs to the urocanase family. The cofactor is NAD(+).

The protein localises to the cytoplasm. It carries out the reaction 4-imidazolone-5-propanoate = trans-urocanate + H2O. It functions in the pathway amino-acid degradation; L-histidine degradation into L-glutamate; N-formimidoyl-L-glutamate from L-histidine: step 2/3. Functionally, catalyzes the conversion of urocanate to 4-imidazolone-5-propionate. In Shewanella baltica (strain OS155 / ATCC BAA-1091), this protein is Urocanate hydratase.